The primary structure comprises 963 residues: Protein translocase subunit SecA (963 aa).

ATP contacts are provided by residues glutamine 87, 105 to 109 (GEGKT), and aspartate 524. Zn(2+) contacts are provided by cysteine 946, cysteine 948, cysteine 957, and histidine 958.

It belongs to the SecA family. In terms of assembly, monomer and homodimer. Part of the essential Sec protein translocation apparatus which comprises SecA, SecYEG and auxiliary proteins SecDF-YajC and YidC. Zn(2+) is required as a cofactor.

The protein resides in the cell inner membrane. Its subcellular location is the cytoplasm. The enzyme catalyses ATP + H2O + cellular proteinSide 1 = ADP + phosphate + cellular proteinSide 2.. Its function is as follows. Part of the Sec protein translocase complex. Interacts with the SecYEG preprotein conducting channel. Has a central role in coupling the hydrolysis of ATP to the transfer of proteins into and across the cell membrane, serving both as a receptor for the preprotein-SecB complex and as an ATP-driven molecular motor driving the stepwise translocation of polypeptide chains across the membrane. The chain is Protein translocase subunit SecA from Methylobacterium radiotolerans (strain ATCC 27329 / DSM 1819 / JCM 2831 / NBRC 15690 / NCIMB 10815 / 0-1).